The primary structure comprises 304 residues: tRNA-uridine aminocarboxypropyltransferase 1 (304 aa).

Residue S2 is modified to N-acetylserine. A DXTW motif is present at residues 206–209; the sequence is DSTW.

It belongs to the TDD superfamily. DTWD1 family.

Its subcellular location is the nucleus. The enzyme catalyses a uridine in tRNA + S-adenosyl-L-methionine = a 3-[(3S)-3-amino-3-carboxypropyl]uridine in tRNA + S-methyl-5'-thioadenosine + H(+). Its function is as follows. Catalyzes the formation of 3-(3-amino-3-carboxypropyl)uridine (acp3U) at position 20 in the D-loop of several cytoplasmic tRNAs (acp3U(20)). This chain is tRNA-uridine aminocarboxypropyltransferase 1, found in Homo sapiens (Human).